The primary structure comprises 332 residues: ATP-dependent (S)-NAD(P)H-hydrate dehydratase (332 aa).

A YjeF C-terminal domain is found at 46–326 (LLERARNIVP…EQIHNVFDDI (281 aa)). (6S)-NADPHX-binding positions include G146 and 199–205 (NAIEFCR). ATP-binding positions include 230–234 (KGLND) and 251–260 (GSGRRCGGQG). D261 contacts (6S)-NADPHX.

The protein belongs to the NnrD/CARKD family. It depends on Mg(2+) as a cofactor.

The enzyme catalyses (6S)-NADHX + ATP = ADP + phosphate + NADH + H(+). It catalyses the reaction (6S)-NADPHX + ATP = ADP + phosphate + NADPH + H(+). In terms of biological role, catalyzes the dehydration of the S-form of NAD(P)HX at the expense of ATP, which is converted to ADP. Together with NAD(P)HX epimerase, which catalyzes the epimerization of the S- and R-forms, the enzyme allows the repair of both epimers of NAD(P)HX, a damaged form of NAD(P)H that is a result of enzymatic or heat-dependent hydration. This chain is ATP-dependent (S)-NAD(P)H-hydrate dehydratase, found in Aedes aegypti (Yellowfever mosquito).